We begin with the raw amino-acid sequence, 381 residues long: Creatine kinase B-type (381 aa).

The Phosphagen kinase N-terminal domain occupies 11-98 (KMKYSVDDEY…FDPVIEDRHG (88 aa)). Val-72 contributes to the creatine binding site. The 243-residue stretch at 125-367 (YVLSSRVRTG…KLLIEMEKRL (243 aa)) folds into the Phosphagen kinase C-terminal domain. Residues 128–132 (SSRVR), Arg-130, Arg-132, and His-191 each bind ATP. Glu-232 serves as a coordination point for creatine. An ATP-binding site is contributed by Arg-236. A Phosphothreonine; by autocatalysis modification is found at Thr-282. Ser-285 provides a ligand contact to creatine. The residue at position 285 (Ser-285) is a Phosphoserine; by autocatalysis. Thr-289 carries the phosphothreonine; by autocatalysis modification. ATP is bound by residues Arg-292, Arg-320, 320 to 325 (RGTGGV), and Asp-335.

Belongs to the ATP:guanido phosphotransferase family. Dimer of identical or non-identical chains, which can be either B (brain type) or M (muscle type). With MM being the major form in skeletal muscle and myocardium, MB existing in myocardium, and BB existing in many tissues, especially brain. Post-translationally, ba-CK and Bb-CK are phosphorylated. In terms of processing, the N-terminus of BA-CK is blocked. Expressed in almost all tissues and found enriched in various region of the brain, retina, heart, gizzard, gut and sperm.

The protein localises to the cytoplasm. Its subcellular location is the cytosol. It is found in the mitochondrion. The protein resides in the cell membrane. The catalysed reaction is creatine + ATP = N-phosphocreatine + ADP + H(+). In terms of biological role, reversibly catalyzes the transfer of phosphate between ATP and various phosphogens (e.g. creatine phosphate). Creatine kinase isoenzymes play a central role in energy transduction in tissues with large, fluctuating energy demands, such as skeletal muscle, heart, brain and spermatozoa. This chain is Creatine kinase B-type, found in Gallus gallus (Chicken).